The following is a 341-amino-acid chain: MKKMMIATLAAASVLLAVANQAXAGATLDAVQKKGFVQCGISDGLPGFSYADADGKFSGIDVDICRGVAAAVFGDDTKVKYTPLTAKERFTALQSGEVDLLSRNTTWTSSRDAGMGMAFTGVTYYDGIGFLTHDKAGLKSAKELDGATVCIQAGTDTELNVADYFKANNMKYTPVTFDRSDESAKALESGRCDTLASDQSQLYALRIKLSNPAEWIVLPEVISKEPLGPVVRRGDDEWFSIVRWTLFAMLNAEEMGINSQNVDEKAANPATPDMAHLLGKEGDYGKDLKLDNKWAYNIIKQVGNYSEIFERNVGSESPLKIKRGQNNLWNNGGIQYAPPVR.

An N-terminal signal peptide occupies residues 1–19; the sequence is MKKMMIATLAAASVLLAVA.

This sequence belongs to the bacterial solute-binding protein 3 family.

The protein resides in the periplasm. Its function is as follows. Probably part of the binding-protein-dependent transport system YdhWXYZ for an amino acid. The sequence is that of Putative amino-acid ABC transporter-binding protein YhdW (yhdW) from Escherichia coli (strain K12).